Here is a 128-residue protein sequence, read N- to C-terminus: 2-iminobutanoate/2-iminopropanoate deaminase (128 aa).

R105 is a substrate binding site.

The protein belongs to the RutC family. Homotrimer.

It localises to the cytoplasm. It catalyses the reaction 2-iminobutanoate + H2O = 2-oxobutanoate + NH4(+). It carries out the reaction 2-iminopropanoate + H2O = pyruvate + NH4(+). Its pathway is amino-acid biosynthesis; L-isoleucine biosynthesis; 2-oxobutanoate from L-threonine. Accelerates the release of ammonia from reactive enamine/imine intermediates of the PLP-dependent threonine dehydratase (IlvA) in the low water environment of the cell. It catalyzes the deamination of enamine/imine intermediates to yield 2-ketobutyrate and ammonia. It is required for the detoxification of reactive intermediates of IlvA due to their highly nucleophilic abilities and to avoid they are captured by anthranilate phosphoribosyltransferase (TrpD) to generate PRA, an intermediate in the alternative pyrimidine biosynthetic (APB) pathway. Also required for full activity of IlvE which is involved in the isoleucine biosynthesis. RidA also accelerates the release of pyruvate produced by IlvA from L-serine. The protein is 2-iminobutanoate/2-iminopropanoate deaminase of Salmonella typhimurium (strain LT2 / SGSC1412 / ATCC 700720).